A 500-amino-acid chain; its full sequence is Glycerol kinase (500 aa).

Thr-12 contacts ADP. ATP is bound by residues Thr-12, Thr-13, and Ser-14. Thr-12 provides a ligand contact to sn-glycerol 3-phosphate. An ADP-binding site is contributed by Arg-16. Residues Arg-82, Glu-83, Tyr-134, and Asp-246 each coordinate sn-glycerol 3-phosphate. Glycerol contacts are provided by Arg-82, Glu-83, Tyr-134, Asp-246, and Gln-247. ADP-binding residues include Thr-268 and Gly-312. Thr-268, Gly-312, Gln-316, and Gly-413 together coordinate ATP. ADP is bound by residues Gly-413 and Asn-417.

This sequence belongs to the FGGY kinase family.

The catalysed reaction is glycerol + ATP = sn-glycerol 3-phosphate + ADP + H(+). Its pathway is polyol metabolism; glycerol degradation via glycerol kinase pathway; sn-glycerol 3-phosphate from glycerol: step 1/1. Its activity is regulated as follows. Inhibited by fructose 1,6-bisphosphate (FBP). In terms of biological role, key enzyme in the regulation of glycerol uptake and metabolism. Catalyzes the phosphorylation of glycerol to yield sn-glycerol 3-phosphate. The sequence is that of Glycerol kinase from Saccharopolyspora erythraea (strain ATCC 11635 / DSM 40517 / JCM 4748 / NBRC 13426 / NCIMB 8594 / NRRL 2338).